We begin with the raw amino-acid sequence, 313 residues long: Aspartate carbamoyltransferase catalytic subunit (313 aa).

R51 and T52 together coordinate carbamoyl phosphate. Position 80 (K80) interacts with L-aspartate. The carbamoyl phosphate site is built by R101, H129, and Q132. The L-aspartate site is built by R162 and R224. Positions 263 and 264 each coordinate carbamoyl phosphate.

This sequence belongs to the aspartate/ornithine carbamoyltransferase superfamily. ATCase family. In terms of assembly, heterododecamer (2C3:3R2) of six catalytic PyrB chains organized as two trimers (C3), and six regulatory PyrI chains organized as three dimers (R2).

The catalysed reaction is carbamoyl phosphate + L-aspartate = N-carbamoyl-L-aspartate + phosphate + H(+). Its pathway is pyrimidine metabolism; UMP biosynthesis via de novo pathway; (S)-dihydroorotate from bicarbonate: step 2/3. Its function is as follows. Catalyzes the condensation of carbamoyl phosphate and aspartate to form carbamoyl aspartate and inorganic phosphate, the committed step in the de novo pyrimidine nucleotide biosynthesis pathway. This Phocaeicola vulgatus (strain ATCC 8482 / DSM 1447 / JCM 5826 / CCUG 4940 / NBRC 14291 / NCTC 11154) (Bacteroides vulgatus) protein is Aspartate carbamoyltransferase catalytic subunit.